An 86-amino-acid polypeptide reads, in one-letter code: Large ribosomal subunit protein bL27 (86 aa).

The disordered stretch occupies residues 1 to 21; sequence MAHKKGASSSRNGRDSAAQRL.

This sequence belongs to the bacterial ribosomal protein bL27 family.

This is Large ribosomal subunit protein bL27 (rpmA) from Mycobacterium tuberculosis (strain CDC 1551 / Oshkosh).